A 401-amino-acid chain; its full sequence is MGFQSSVEGLTQASACGDILQYIESDDGGNKKSSKKKDKKKSGPIVVNLKLLFEVTDPAGNEAPSLMRMSAQQHSVKMPLPLDCVLSVSADESMTTVFTGLVEALNKQIADMEEVVLRYRKGSSFLVPQPFHFQLPKPAGLTTVIYPAGVPDSQLQAVREDLHRKFELSLDRPYLRRANAFHFPYEAYKDGYLRNPHIHLNPPNIEDAKLYLVQGVYSYHHYMQDRVDDDGWGCAYRSLQTICSWFQQQGYVETAVPTHTQIQQALVDVGDKEPRFVGSRQWIGSIEVQAVLNQLLGVTSKIMFVSQGSELATKGRELANHFHTEGTPVMIGGGVLAHTILGVAWSENTGEIRFLILDPHYTGGEDLQIITDKGWCGWKGPEFWDQNAYYNLCLPQRPKTV.

Residues Cys-234, Asp-358, and His-360 contribute to the active site.

This sequence belongs to the peptidase C78 family.

The protein localises to the endoplasmic reticulum. Its subcellular location is the cytoplasm. It localises to the nucleus. Its function is as follows. Thiol-dependent isopeptidase that specifically cleaves UFM1, a ubiquitin-like modifier protein, from conjugated proteins. While it is also able to mediate the processing of UFM1 precursors, a prerequisite for conjugation reactions, ufsp2 mainly acts as a protein deUFMylase that mediates deconjugation of UFM1 from target proteins. In Danio rerio (Zebrafish), this protein is Ufm1-specific protease 2.